The sequence spans 255 residues: Trans-aconitate 2-methyltransferase (255 aa).

The protein belongs to the methyltransferase superfamily. Tam family.

The protein resides in the cytoplasm. It catalyses the reaction trans-aconitate + S-adenosyl-L-methionine = (E)-3-(methoxycarbonyl)pent-2-enedioate + S-adenosyl-L-homocysteine. In terms of biological role, catalyzes the S-adenosylmethionine monomethyl esterification of trans-aconitate. This chain is Trans-aconitate 2-methyltransferase, found in Mycolicibacterium gilvum (strain PYR-GCK) (Mycobacterium gilvum (strain PYR-GCK)).